A 232-amino-acid chain; its full sequence is Uracil-DNA glycosylase (232 aa).

The Proton acceptor role is filled by D64.

This sequence belongs to the uracil-DNA glycosylase (UDG) superfamily. UNG family.

The protein localises to the cytoplasm. The enzyme catalyses Hydrolyzes single-stranded DNA or mismatched double-stranded DNA and polynucleotides, releasing free uracil.. Its function is as follows. Excises uracil residues from the DNA which can arise as a result of misincorporation of dUMP residues by DNA polymerase or due to deamination of cytosine. This chain is Uracil-DNA glycosylase, found in Shouchella clausii (strain KSM-K16) (Alkalihalobacillus clausii).